Consider the following 257-residue polypeptide: Imidazole glycerol phosphate synthase subunit HisF (257 aa).

Active-site residues include Asp-11 and Asp-130.

Belongs to the HisA/HisF family. Heterodimer of HisH and HisF.

It localises to the cytoplasm. The catalysed reaction is 5-[(5-phospho-1-deoxy-D-ribulos-1-ylimino)methylamino]-1-(5-phospho-beta-D-ribosyl)imidazole-4-carboxamide + L-glutamine = D-erythro-1-(imidazol-4-yl)glycerol 3-phosphate + 5-amino-1-(5-phospho-beta-D-ribosyl)imidazole-4-carboxamide + L-glutamate + H(+). It functions in the pathway amino-acid biosynthesis; L-histidine biosynthesis; L-histidine from 5-phospho-alpha-D-ribose 1-diphosphate: step 5/9. Its function is as follows. IGPS catalyzes the conversion of PRFAR and glutamine to IGP, AICAR and glutamate. The HisF subunit catalyzes the cyclization activity that produces IGP and AICAR from PRFAR using the ammonia provided by the HisH subunit. This Shewanella frigidimarina (strain NCIMB 400) protein is Imidazole glycerol phosphate synthase subunit HisF.